Consider the following 305-residue polypeptide: Beta-lactamase (305 aa).

Positions 1–34 form a signal peptide, tat-type signal; that stretch reads MGTTGARPSRRAVLTAAAGAAVAGIPLGGSTAFA. The active-site Acyl-ester intermediate is S82. 250-252 contacts substrate; it reads KTG.

It belongs to the class-A beta-lactamase family. Post-translationally, predicted to be exported by the Tat system. The position of the signal peptide cleavage has not been experimentally proven.

The catalysed reaction is a beta-lactam + H2O = a substituted beta-amino acid. In Streptomyces lavendulae, this protein is Beta-lactamase.